A 325-amino-acid polypeptide reads, in one-letter code: tRNA N6-adenosine threonylcarbamoyltransferase (325 aa).

Fe cation is bound by residues His107, His111, and Tyr127. Residues 127 to 131 (YVSGG), Asp159, Gly172, Glu176, and Asn257 contribute to the substrate site. Position 285 (Asp285) interacts with Fe cation.

The protein belongs to the KAE1 / TsaD family. Monomer. Component of the KEOPS complex that consists of Kae1, Bud32, Cgi121 and Pcc1; the whole complex dimerizes. The cofactor is Fe(2+).

It is found in the cytoplasm. The catalysed reaction is L-threonylcarbamoyladenylate + adenosine(37) in tRNA = N(6)-L-threonylcarbamoyladenosine(37) in tRNA + AMP + H(+). Functionally, required for the formation of a threonylcarbamoyl group on adenosine at position 37 (t(6)A37) in tRNAs that read codons beginning with adenine. Is a component of the KEOPS complex that is probably involved in the transfer of the threonylcarbamoyl moiety of threonylcarbamoyl-AMP (TC-AMP) to the N6 group of A37. Kae1 likely plays a direct catalytic role in this reaction, but requires other protein(s) of the complex to fulfill this activity. The polypeptide is tRNA N6-adenosine threonylcarbamoyltransferase (Thermococcus gammatolerans (strain DSM 15229 / JCM 11827 / EJ3)).